Consider the following 594-residue polypeptide: MLRTHTCGELRRDHIDQTVTLAGWVHRRRDHGTVLFLDLRDRYGLTQVIVDPSSNPEARAMLDSIKNEYVIQVTGRVRSRLEGAENANLATGAIELEVQSAKILNTAKTPPILVNRDGGEDEALRLKYRYIELRRERQQHILGLRHRTIKFMRDWMDREGFWEIETPILMKSTPEGARDYLVPSRLHPGEFYALPQSPQQLKQLLMVSGIDKYFQIARCMRDEDLRADRQPEFTQLDIEMSFVEQDDVLDVVERLMTELVANVTPHKRLVSPFPRLTYADAIEYYGSDKPDLRYDLKFVNVGEIVKDSQFGVFTGALSSGGKVQAIRLPGCGSYSRKQIDDLQEVAKIGGAKGMAWMAIEADGSVRSPIAKFFEQAQLDQLKSATAAEAGDLIVYVADKPAVVAASLDKVRREMAKRLDLADKDLMHFAWVIDFPMFEYNAESGEWDAAHHPFCMVNPADVEKMQRGEFEGVRAASYDLVCNGYELASGSIRIHDRSIQQYIFDRLPYSPEEIQKRFGHMLEAFEYGAPPHGGMAPGIDRLVMLLADTDNIRDVIAFPKTQRAEDLMMNAPSSVDAKQLRELGLRLADGVEPRG.

Residue glutamate 175 participates in L-aspartate binding. Positions 199–202 (QQLK) are aspartate. Residue arginine 221 participates in L-aspartate binding. ATP is bound by residues 221–223 (RDE) and glutamine 230. L-aspartate is bound at residue histidine 450. Position 485 (glutamate 485) interacts with ATP. Position 492 (arginine 492) interacts with L-aspartate. Residue 537-540 (GIDR) coordinates ATP.

Belongs to the class-II aminoacyl-tRNA synthetase family. Type 1 subfamily. In terms of assembly, homodimer.

The protein resides in the cytoplasm. It carries out the reaction tRNA(Asx) + L-aspartate + ATP = L-aspartyl-tRNA(Asx) + AMP + diphosphate. Aspartyl-tRNA synthetase with relaxed tRNA specificity since it is able to aspartylate not only its cognate tRNA(Asp) but also tRNA(Asn). Reaction proceeds in two steps: L-aspartate is first activated by ATP to form Asp-AMP and then transferred to the acceptor end of tRNA(Asp/Asn). The chain is Aspartate--tRNA(Asp/Asn) ligase from Herpetosiphon aurantiacus (strain ATCC 23779 / DSM 785 / 114-95).